The following is a 727-amino-acid chain: Glycerol-3-phosphate dehydrogenase, mitochondrial (727 aa).

Residues 1–42 constitute a mitochondrion transit peptide; the sequence is MAFQKAVKRTVLVCGGALATVLGLSQCSHYRRKQVNLACLKA. 71 to 99 contributes to the FAD binding site; sequence DILVIGGGATGSGCALDAVTRGLKTALVE. The residue at position 601 (Tyr-601) is a Phosphotyrosine. 2 EF-hand domains span residues 623 to 658 and 659 to 694; these read SDIERYTKRFHKFDADEKGFITIVDVQRVLENINVK and IDENTLHEILSEVDLNKNGQVELNEFLQLMSAIQKG. Residues Asp-672, Asn-674, Asn-676, Gln-678, and Glu-683 each coordinate Ca(2+).

Belongs to the FAD-dependent glycerol-3-phosphate dehydrogenase family. The cofactor is FAD.

It localises to the mitochondrion. It carries out the reaction a quinone + sn-glycerol 3-phosphate = dihydroxyacetone phosphate + a quinol. It functions in the pathway polyol metabolism; glycerol degradation via glycerol kinase pathway; glycerone phosphate from sn-glycerol 3-phosphate (aerobic route): step 1/1. With respect to regulation, calcium-binding enhance the activity of the enzyme. Functionally, calcium-responsive mitochondrial glycerol-3-phosphate dehydrogenase which seems to be a key component of the pancreatic beta-cell glucose-sensing device. The sequence is that of Glycerol-3-phosphate dehydrogenase, mitochondrial (GPD2) from Mesocricetus auratus (Golden hamster).